A 424-amino-acid polypeptide reads, in one-letter code: Inhibin beta A chain (424 aa).

The signal sequence occupies residues 1–20 (MPLLWKRGFLLVICWIIVRS). Residues 21 to 308 (SPTPGSEGHS…EDRQHRRRER (288 aa)) constitute a propeptide that is removed on maturation. An N-linked (GlcNAc...) asparagine glycan is attached at asparagine 165. 2 disordered regions span residues 178–200 (QQRQ…LKGE) and 260–288 (KKKK…QSHR). Residues 263 to 275 (KEDDGEGKEKDGG) are compositionally biased toward basic and acidic residues. Disulfide bonds link cysteine 312–cysteine 320, cysteine 319–cysteine 389, cysteine 348–cysteine 421, and cysteine 352–cysteine 423.

It belongs to the TGF-beta family. In terms of assembly, dimeric, linked by one or more disulfide bonds. Inhibin A is a dimer of alpha and beta-A. Inhibin B is a dimer of alpha and beta-B. Activin A is a homodimer of beta-A. Activin B is a homodimer of beta-B. Activin AB is a dimer of beta-A and beta-B. As to expression, ciliary ganglion neurons. Levels are higher in the choroid than the iris.

It localises to the secreted. Functionally, inhibins and activins inhibit and activate, respectively, the secretion of follitropin by the pituitary gland. Inhibins/activins are involved in regulating a number of diverse functions such as hypothalamic and pituitary hormone secretion, gonadal hormone secretion, germ cell development and maturation, erythroid differentiation, insulin secretion, nerve cell survival, embryonic axial development or bone growth, depending on their subunit composition. Inhibins appear to oppose the functions of activins. Induces somatostatin in the ciliary ganglion neurons and may play a role in regulating neurotransmitter phenotype. The protein is Inhibin beta A chain (INHBA) of Gallus gallus (Chicken).